We begin with the raw amino-acid sequence, 607 residues long: Nexilin (607 aa).

A compositionally biased stretch (basic and acidic residues) spans 1 to 14 (MNDVSQKAEIKEML). Disordered regions lie at residues 1–143 (MNDV…EDKM) and 165–268 (ETEA…RRRI). Serine 16 bears the Phosphoserine mark. Composition is skewed to basic and acidic residues over residues 40–85 (GKFD…RAEQ), 120–143 (KTKD…EDKM), 167–221 (EAKK…HMVN), and 228–268 (DRET…RRRI). Serine 172 is subject to Phosphoserine. Serine 281, serine 288, and serine 296 each carry phosphoserine. Residue threonine 301 is modified to Phosphothreonine. Disordered regions lie at residues 419–444 (NFHE…KVNM) and 480–514 (AALQ…GAPW). Serine 495 and serine 500 each carry phosphoserine. Threonine 502 is modified (phosphothreonine). The region spanning 513–601 (PWFKKPLRNT…GSAASTCILT (89 aa)) is the Ig-like domain.

As to quaternary structure, interacts with F-actin.

Its subcellular location is the cytoplasm. It localises to the cytoskeleton. It is found in the cell junction. The protein resides in the adherens junction. The protein localises to the myofibril. Its subcellular location is the sarcomere. It localises to the z line. In terms of biological role, involved in regulating cell migration through association with the actin cytoskeleton. Has an essential role in the maintenance of Z line and sarcomere integrity. The sequence is that of Nexilin from Mus musculus (Mouse).